The following is a 157-amino-acid chain: Protein Smg homolog (157 aa).

This sequence belongs to the Smg family.

The protein is Protein Smg homolog of Tolumonas auensis (strain DSM 9187 / NBRC 110442 / TA 4).